The following is a 257-amino-acid chain: Homeobox protein goosecoid (257 aa).

Positions 160–219 form a DNA-binding region, homeobox; the sequence is KRRHRTIFTDEQLEALENLFQETKYPDVGTREQLARKVHLREEKVEVWFKNRRAKWRRQK. Residues 213-257 form a disordered region; that stretch reads AKWRRQKRSSSEESENAEKWNKTSSSKASPEKREEEGKSDLDSDS. Residues 241-257 are compositionally biased toward basic and acidic residues; it reads SPEKREEEGKSDLDSDS.

This sequence belongs to the paired homeobox family. Bicoid subfamily.

The protein localises to the nucleus. Regulates chordin (CHRD). May play a role in spatial programing within discrete embryonic fields or lineage compartments during organogenesis. In concert with NKX3-2, plays a role in defining the structural components of the middle ear; required for the development of the entire tympanic ring. Probably involved in the regulatory networks that define neural crest cell fate specification and determine mesoderm cell lineages in mammals. The polypeptide is Homeobox protein goosecoid (GSC) (Gorilla gorilla gorilla (Western lowland gorilla)).